The following is a 149-amino-acid chain: Large ribosomal subunit protein bL9 (149 aa).

It belongs to the bacterial ribosomal protein bL9 family.

Functionally, binds to the 23S rRNA. The sequence is that of Large ribosomal subunit protein bL9 from Pasteurella multocida (strain Pm70).